A 464-amino-acid polypeptide reads, in one-letter code: Argininosuccinate lyase (464 aa).

Belongs to the lyase 1 family. Argininosuccinate lyase subfamily.

The protein localises to the cytoplasm. The enzyme catalyses 2-(N(omega)-L-arginino)succinate = fumarate + L-arginine. It participates in amino-acid biosynthesis; L-arginine biosynthesis; L-arginine from L-ornithine and carbamoyl phosphate: step 3/3. The sequence is that of Argininosuccinate lyase from Streptococcus suis (strain 98HAH33).